The following is a 297-amino-acid chain: GTPase Era (297 aa).

The 168-residue stretch at 7 to 174 (RSGFVSIVGR…VQLVHGLLPE (168 aa)) folds into the Era-type G domain. The tract at residues 15 to 22 (GRPNVGKS) is G1. 15–22 (GRPNVGKS) serves as a coordination point for GTP. The tract at residues 41 to 45 (QTTRN) is G2. A G3 region spans residues 62-65 (DTPG). Residues 62–66 (DTPGI) and 124–127 (NKID) each bind GTP. Residues 124–127 (NKID) are G4. The segment at 153 to 155 (VSA) is G5. The KH type-2 domain maps to 205–282 (THDEVPYSTA…FLELFVRVSG (78 aa)).

It belongs to the TRAFAC class TrmE-Era-EngA-EngB-Septin-like GTPase superfamily. Era GTPase family. As to quaternary structure, monomer.

Its subcellular location is the cytoplasm. It is found in the cell inner membrane. In terms of biological role, an essential GTPase that binds both GDP and GTP, with rapid nucleotide exchange. Plays a role in 16S rRNA processing and 30S ribosomal subunit biogenesis and possibly also in cell cycle regulation and energy metabolism. The polypeptide is GTPase Era (Geobacter sp. (strain M21)).